The primary structure comprises 137 residues: BolA-like protein 1 (137 aa).

S81 bears the Phosphoserine mark. Residues 114–137 (WGENSQLDTSPPCLGGNKKTLGTP) are disordered.

It belongs to the BolA/IbaG family. As to quaternary structure, interacts with GLRX5.

Its subcellular location is the mitochondrion. Its function is as follows. Acts as a mitochondrial iron-sulfur (Fe-S) cluster assembly factor that facilitates (Fe-S) cluster insertion into a subset of mitochondrial proteins. Probably acts together with the monothiol glutaredoxin GLRX5. May protect cells against oxidative stress. In Pongo abelii (Sumatran orangutan), this protein is BolA-like protein 1 (BOLA1).